The chain runs to 92 residues: Small ribosomal subunit protein uS19c (92 aa).

The tract at residues 73–92 is disordered; that stretch reads EFSPTRTYRGHAKKDKKAKR. Over residues 80 to 92 the composition is skewed to basic residues; the sequence is YRGHAKKDKKAKR.

The protein belongs to the universal ribosomal protein uS19 family.

It localises to the plastid. The protein localises to the chloroplast. Its function is as follows. Protein S19 forms a complex with S13 that binds strongly to the 16S ribosomal RNA. In Chlamydomonas reinhardtii (Chlamydomonas smithii), this protein is Small ribosomal subunit protein uS19c (rps19).